Reading from the N-terminus, the 564-residue chain is Kelch repeat and BTB domain-containing protein 1 (564 aa).

Residues 21–88 (CDINIVINDE…IYGIPLSLTN (68 aa)) form the BTB domain. The region spanning 123–219 (CIDFYIYADK…SLLSPQVIKS (97 aa)) is the BACK domain. Kelch repeat units lie at residues 252–297 (IELI…VLDN), 298–346 (IIYM…ADDE), 347–395 (YIYC…MLNG), 397–441 (IYVI…VHDG), and 442–492 (KIYI…STHN).

As to quaternary structure, interacts (via BTB domain) with host CUL3.

Its subcellular location is the host cytoplasm. In terms of biological role, probable substrate-specific adapter of CUL3-containing E3 ubiquitin-protein ligases which mediate the ubiquitination and subsequent proteasomal degradation of host target proteins. The sequence is that of Kelch repeat and BTB domain-containing protein 1 (KBTB1) from Bos taurus (Bovine).